The primary structure comprises 319 residues: Protein sprouty homolog 1 (319 aa).

Met-1 carries the post-translational modification N-acetylmethionine. The disordered stretch occupies residues 54–160 (TEGPSVVKRP…ERAIRTQPKQ (107 aa)). The span at 69–79 (PRQEKHERTHE) shows a compositional bias: basic and acidic residues. Over residues 112 to 131 (SRSTSTGSAASSGSNSSASS) the composition is skewed to low complexity. The region spanning 183 to 295 (QCGKCKCGEC…CYDWIHRPGC (113 aa)) is the SPR domain.

Belongs to the sprouty family. As to quaternary structure, forms heterodimers with SPRY2. Interacts with TESK1. Interacts with CAV1 (via C-terminus).

The protein resides in the cytoplasm. It localises to the membrane. Functionally, inhibits fibroblast growth factor (FGF)-induced retinal lens fiber differentiation, probably by inhibiting FGF-mediated phosphorylation of ERK1/2. Inhibits TGFB-induced epithelial-to-mesenchymal transition in lens epithelial cells. The protein is Protein sprouty homolog 1 (SPRY1) of Cervus elaphus (Red deer).